The primary structure comprises 346 residues: Iron uptake protein A2 (346 aa).

The tat-type signal signal peptide spans 1–31 (MTTKISRRTFFVGGTALTALVVANLPRRASA). Residues His-43, Tyr-44, Tyr-169, Tyr-225, and Tyr-226 each contribute to the Fe cation site.

It belongs to the bacterial solute-binding protein 1 family. Post-translationally, predicted to be exported by the Tat system. The position of the signal peptide cleavage has not been experimentally proven.

Its subcellular location is the cellular thylakoid membrane. It localises to the periplasm. Functionally, probably part of a periplasmic ABC transporter complex futA1A2BC (TC 3.A.1.10.2) involved in Fe(3+) ion import (ferric iron). This protein and futA1 (slr1295) are subunit proteins that have redundant or overlapping substrate-binding functions. The differing subcellular locations of futA1 (predominantly thylakoid lumen) and futA2 (predominantly periplasmic) suggest they may fulfill different roles. In terms of biological role, plays an important role in protecting the acceptor side of photosystem II (PSII) against oxidative damage, especially under iron-limiting growth conditions. Its function is as follows. Plays an undefined role in copper supply to thylakoid proteins. This Synechocystis sp. (strain ATCC 27184 / PCC 6803 / Kazusa) protein is Iron uptake protein A2 (futA2).